We begin with the raw amino-acid sequence, 346 residues long: GTP-binding RHO-like protein (346 aa).

Positions 1–10 (MTPNGSRRHS) are enriched in basic residues. A disordered region spans residues 1–25 (MTPNGSRRHSAYMGSPRSQHSSTME). Residues 16 to 25 (PRSQHSSTME) show a composition bias toward polar residues. 82–89 (GDGGCGKT) contacts GTP. The Effector region signature appears at 104–112 (YVPTVFENY). GTP is bound by residues 130 to 134 (DTAGQ) and 188 to 191 (TKSD). The segment at 259–294 (LGGSNGGSGNHSRHHSRNYSNVSNNRRGHLKNTSYD) is disordered. C343 carries the cysteine methyl ester modification. Residue C343 is the site of S-geranylgeranyl cysteine attachment. Residues 344–346 (VIL) constitute a propeptide, removed in mature form.

It belongs to the small GTPase superfamily. Rho family.

Its subcellular location is the cell membrane. The sequence is that of GTP-binding RHO-like protein (CRL1) from Candida albicans (strain WO-1) (Yeast).